A 261-amino-acid chain; its full sequence is 3-deoxy-manno-octulosonate cytidylyltransferase 1 (261 aa).

Belongs to the KdsB family.

Its subcellular location is the cytoplasm. It catalyses the reaction 3-deoxy-alpha-D-manno-oct-2-ulosonate + CTP = CMP-3-deoxy-beta-D-manno-octulosonate + diphosphate. It functions in the pathway nucleotide-sugar biosynthesis; CMP-3-deoxy-D-manno-octulosonate biosynthesis; CMP-3-deoxy-D-manno-octulosonate from 3-deoxy-D-manno-octulosonate and CTP: step 1/1. The protein operates within bacterial outer membrane biogenesis; lipopolysaccharide biosynthesis. In terms of biological role, activates KDO (a required 8-carbon sugar) for incorporation into bacterial lipopolysaccharide in Gram-negative bacteria. This chain is 3-deoxy-manno-octulosonate cytidylyltransferase 1, found in Burkholderia lata (strain ATCC 17760 / DSM 23089 / LMG 22485 / NCIMB 9086 / R18194 / 383).